The chain runs to 324 residues: RING-H2 finger protein ATL3 (324 aa).

A helical membrane pass occupies residues 24–44 (IILTAIIVLFMAVLFVLILHL). Residues 127 to 169 (CSICLSELVKGDKARLLPKCNHSFHVECIDMWFQSHSTCPICR) form an RING-type; atypical zinc finger. Disordered regions lie at residues 179-210 (SSKRVEQVPDNAENAGTTNNNHDALSQLSTSS), 226-248 (VSTGNTNVGTQEDGAAGNGASQS), and 299-324 (RDKRVGCSNSSTSNSSSSNAVASVDP). Polar residues-rich tracts occupy residues 192–210 (NAGTTNNNHDALSQLSTSS) and 226–235 (VSTGNTNVGT). Over residues 306 to 324 (SNSSTSNSSSSNAVASVDP) the composition is skewed to low complexity.

The protein belongs to the RING-type zinc finger family. ATL subfamily.

Its subcellular location is the membrane. It carries out the reaction S-ubiquitinyl-[E2 ubiquitin-conjugating enzyme]-L-cysteine + [acceptor protein]-L-lysine = [E2 ubiquitin-conjugating enzyme]-L-cysteine + N(6)-ubiquitinyl-[acceptor protein]-L-lysine.. It participates in protein modification; protein ubiquitination. This is RING-H2 finger protein ATL3 (ATL3) from Arabidopsis thaliana (Mouse-ear cress).